A 244-amino-acid chain; its full sequence is 5-oxoprolinase subunit A (244 aa).

This sequence belongs to the LamB/PxpA family. As to quaternary structure, forms a complex composed of PxpA, PxpB and PxpC.

It catalyses the reaction 5-oxo-L-proline + ATP + 2 H2O = L-glutamate + ADP + phosphate + H(+). Catalyzes the cleavage of 5-oxoproline to form L-glutamate coupled to the hydrolysis of ATP to ADP and inorganic phosphate. This is 5-oxoprolinase subunit A from Citrobacter koseri (strain ATCC BAA-895 / CDC 4225-83 / SGSC4696).